A 159-amino-acid chain; its full sequence is Large ribosomal subunit protein uL22 (159 aa).

Belongs to the universal ribosomal protein uL22 family. In terms of assembly, part of the 50S ribosomal subunit.

This protein binds specifically to 23S rRNA. It makes multiple contacts with different domains of the 23S rRNA in the assembled 50S subunit and ribosome. In terms of biological role, the globular domain of the protein is located near the polypeptide exit tunnel on the outside of the subunit, while an extended beta-hairpin is found that lines the wall of the exit tunnel in the center of the 70S ribosome. The polypeptide is Large ribosomal subunit protein uL22 (Methanopyrus kandleri (strain AV19 / DSM 6324 / JCM 9639 / NBRC 100938)).